The following is a 124-amino-acid chain: Fluoride-specific ion channel FluC (124 aa).

The next 4 membrane-spanning stretches (helical) occupy residues 3–23 (YLLVFLGGGLGAMFRHFINTV), 36–56 (TFFINVSGSLVMGLIAGYFAF), 66–86 (LFLMTGILGGYTTFSAFSLDA), and 100–120 (LYVLGSVALAIAGLFAGLALI). Residues Gly-74 and Thr-77 each contribute to the Na(+) site.

This sequence belongs to the fluoride channel Fluc/FEX (TC 1.A.43) family.

It is found in the cell inner membrane. The catalysed reaction is fluoride(in) = fluoride(out). Its activity is regulated as follows. Na(+) is not transported, but it plays an essential structural role and its presence is essential for fluoride channel function. Fluoride-specific ion channel. Important for reducing fluoride concentration in the cell, thus reducing its toxicity. This Rhodopseudomonas palustris (strain BisB5) protein is Fluoride-specific ion channel FluC.